The primary structure comprises 476 residues: Sulfate adenylyltransferase subunit 1 (476 aa).

Residues 24–239 (KSMLRFLTCG…VLENVDIDQK (216 aa)) form the tr-type G domain. The tract at residues 33-40 (GSVDDGKS) is G1. 33–40 (GSVDDGKS) is a binding site for GTP. The tract at residues 91 to 95 (GITID) is G2. Residues 112-115 (DTPG) form a G3 region. Residues 112-116 (DTPGH) and 167-170 (NKMD) contribute to the GTP site. The tract at residues 167–170 (NKMD) is G4. The tract at residues 205–207 (SAL) is G5.

Belongs to the TRAFAC class translation factor GTPase superfamily. Classic translation factor GTPase family. CysN/NodQ subfamily. As to quaternary structure, heterodimer composed of CysD, the smaller subunit, and CysN.

The catalysed reaction is sulfate + ATP + H(+) = adenosine 5'-phosphosulfate + diphosphate. It participates in sulfur metabolism; hydrogen sulfide biosynthesis; sulfite from sulfate: step 1/3. With CysD forms the ATP sulfurylase (ATPS) that catalyzes the adenylation of sulfate producing adenosine 5'-phosphosulfate (APS) and diphosphate, the first enzymatic step in sulfur assimilation pathway. APS synthesis involves the formation of a high-energy phosphoric-sulfuric acid anhydride bond driven by GTP hydrolysis by CysN coupled to ATP hydrolysis by CysD. The sequence is that of Sulfate adenylyltransferase subunit 1 from Vibrio atlanticus (strain LGP32) (Vibrio splendidus (strain Mel32)).